Here is a 44-residue protein sequence, read N- to C-terminus: U4-ctenitoxin-Pk1a (44 aa).

Disulfide bonds link Cys-4–Cys-18, Cys-11–Cys-24, Cys-15–Cys-42, Cys-17–Cys-33, and Cys-26–Cys-31.

Expressed by the venom gland.

It localises to the secreted. Its function is as follows. Neurotoxin. Causes spastic paralysis and death in mice within 10 minutes at dose levels of 3 ug per mouse. The protein is U4-ctenitoxin-Pk1a of Phoneutria keyserlingi (Brazilian wandering spider).